The primary structure comprises 277 residues: NH(3)-dependent NAD(+) synthetase (277 aa).

Residue 36–43 (GLSGGIDS) coordinates ATP. D42 lines the Mg(2+) pocket. Residue R118 coordinates deamido-NAD(+). T138 is an ATP binding site. Mg(2+) is bound at residue E143. Positions 167 and 189 each coordinate ATP.

This sequence belongs to the NAD synthetase family. In terms of assembly, homodimer.

It catalyses the reaction deamido-NAD(+) + NH4(+) + ATP = AMP + diphosphate + NAD(+) + H(+). It participates in cofactor biosynthesis; NAD(+) biosynthesis; NAD(+) from deamido-NAD(+) (ammonia route): step 1/1. Functionally, catalyzes the ATP-dependent amidation of deamido-NAD to form NAD. Uses ammonia as a nitrogen source. This is NH(3)-dependent NAD(+) synthetase from Pelodictyon phaeoclathratiforme (strain DSM 5477 / BU-1).